Here is a 559-residue protein sequence, read N- to C-terminus: Prolyl 4-hydroxylase subunit alpha-1 (559 aa).

A signal peptide spans 1–16 (MRLALLVLATIGYAVA). N-linked (GlcNAc...) asparagine glycosylation occurs at Asn158. The Fe2OG dioxygenase domain maps to 404-512 (TAEELQIANY…KWVSNKWIHE (109 aa)). 3 residues coordinate Fe cation: His422, Asp424, and His493. Residue Lys503 coordinates 2-oxoglutarate.

Belongs to the P4HA family. In terms of assembly, heterotetramer of two alpha chains and two beta chains. Exists either as a phy-1(2)/pdi-2(2) tetramer or as a phy-1/phy-2/pdi-2(2) tetramer. Fe(2+) is required as a cofactor. L-ascorbate serves as cofactor.

Its subcellular location is the endoplasmic reticulum lumen. It catalyses the reaction L-prolyl-[collagen] + 2-oxoglutarate + O2 = trans-4-hydroxy-L-prolyl-[collagen] + succinate + CO2. Functionally, catalyzes the post-translational formation of 4-hydroxyproline in -Xaa-Pro-Gly- sequences in collagens and other proteins. The protein is Prolyl 4-hydroxylase subunit alpha-1 (dpy-18) of Caenorhabditis elegans.